We begin with the raw amino-acid sequence, 480 residues long: Bifunctional protein GlmU (480 aa).

The pyrophosphorylase stretch occupies residues 1–247 (MATPIDVVIM…AAQVAGVNSP (247 aa)). Residues K24, Q86, 91–92 (GT), 113–115 (SGD), G150, E172, and N245 each bind UDP-N-acetyl-alpha-D-glucosamine. D115 lines the Mg(2+) pocket. N245 provides a ligand contact to Mg(2+). Residues 248–268 (VQLAELERVYQLRQATALMEQ) are linker. The tract at residues 269-480 (GVRLADPARF…WKRPVKVSKG (212 aa)) is N-acetyltransferase. R355 and K373 together coordinate UDP-N-acetyl-alpha-D-glucosamine. H385 functions as the Proton acceptor in the catalytic mechanism. Y388 and N399 together coordinate UDP-N-acetyl-alpha-D-glucosamine. Acetyl-CoA is bound by residues A402, 408 to 409 (NY), S427, G445, and R462.

The protein in the N-terminal section; belongs to the N-acetylglucosamine-1-phosphate uridyltransferase family. In the C-terminal section; belongs to the transferase hexapeptide repeat family. As to quaternary structure, homotrimer. It depends on Mg(2+) as a cofactor.

It localises to the cytoplasm. The catalysed reaction is alpha-D-glucosamine 1-phosphate + acetyl-CoA = N-acetyl-alpha-D-glucosamine 1-phosphate + CoA + H(+). It carries out the reaction N-acetyl-alpha-D-glucosamine 1-phosphate + UTP + H(+) = UDP-N-acetyl-alpha-D-glucosamine + diphosphate. It participates in nucleotide-sugar biosynthesis; UDP-N-acetyl-alpha-D-glucosamine biosynthesis; N-acetyl-alpha-D-glucosamine 1-phosphate from alpha-D-glucosamine 6-phosphate (route II): step 2/2. The protein operates within nucleotide-sugar biosynthesis; UDP-N-acetyl-alpha-D-glucosamine biosynthesis; UDP-N-acetyl-alpha-D-glucosamine from N-acetyl-alpha-D-glucosamine 1-phosphate: step 1/1. It functions in the pathway bacterial outer membrane biogenesis; LPS lipid A biosynthesis. In terms of biological role, catalyzes the last two sequential reactions in the de novo biosynthetic pathway for UDP-N-acetylglucosamine (UDP-GlcNAc). The C-terminal domain catalyzes the transfer of acetyl group from acetyl coenzyme A to glucosamine-1-phosphate (GlcN-1-P) to produce N-acetylglucosamine-1-phosphate (GlcNAc-1-P), which is converted into UDP-GlcNAc by the transfer of uridine 5-monophosphate (from uridine 5-triphosphate), a reaction catalyzed by the N-terminal domain. The chain is Bifunctional protein GlmU from Polaromonas sp. (strain JS666 / ATCC BAA-500).